Consider the following 525-residue polypeptide: Patatin-like protein 8 (525 aa).

The segment at 1 to 50 (MNRRYEKPPPLSVSSKGKKKHFVNHTAPNTPGNYERTQTSPTLSTARSHE) is disordered. A compositionally biased stretch (polar residues) spans 26-46 (TAPNTPGNYERTQTSPTLSTA). In terms of domain architecture, PNPLA spans 124-338 (LSIDGGGMRG…AMSNPTAAAI (215 aa)). Positions 128–133 (GGGMRG) match the GXGXXG motif. Ser168 serves as the catalytic Nucleophile.

The protein belongs to the patatin family. As to expression, specifically expressed in roots.

Its function is as follows. Possesses non-specific lipolytic acyl hydrolase (LAH) activity. Hydrolyzes phospholipids as well as galactolipids. May play a role in disease resistance. The protein is Patatin-like protein 8 (PLP8) of Arabidopsis thaliana (Mouse-ear cress).